Consider the following 459-residue polypeptide: tRNA modification GTPase MnmE (459 aa).

Arg-23, Glu-88, and Arg-127 together coordinate (6S)-5-formyl-5,6,7,8-tetrahydrofolate. In terms of domain architecture, TrmE-type G spans 223–381; sequence GLNTVIIGKP…LKDTIENMFA (159 aa). Asn-233 contacts K(+). GTP contacts are provided by residues 233-238, 252-258, and 277-280; these read NVGKSS, TDIPGTT, and DTAG. Residue Ser-237 coordinates Mg(2+). Residues Thr-252, Ile-254, and Thr-257 each contribute to the K(+) site. Thr-258 serves as a coordination point for Mg(2+). Residue Lys-459 coordinates (6S)-5-formyl-5,6,7,8-tetrahydrofolate.

Belongs to the TRAFAC class TrmE-Era-EngA-EngB-Septin-like GTPase superfamily. TrmE GTPase family. Homodimer. Heterotetramer of two MnmE and two MnmG subunits. It depends on K(+) as a cofactor.

The protein localises to the cytoplasm. In terms of biological role, exhibits a very high intrinsic GTPase hydrolysis rate. Involved in the addition of a carboxymethylaminomethyl (cmnm) group at the wobble position (U34) of certain tRNAs, forming tRNA-cmnm(5)s(2)U34. The chain is tRNA modification GTPase MnmE from Clostridium acetobutylicum (strain ATCC 824 / DSM 792 / JCM 1419 / IAM 19013 / LMG 5710 / NBRC 13948 / NRRL B-527 / VKM B-1787 / 2291 / W).